The following is a 278-amino-acid chain: MADS-box transcription factor PHERES 2 (278 aa).

Residues 1 to 60 enclose the MADS-box domain; the sequence is MKRKMKLSLIENSVSRKTTFTKRKKGMTKKLTELVTLCGVEACAVVYSPFNSIPEAWPSR.

As to quaternary structure, interacts with AGL61/DIANA and AGL62. Male gametophyte, embryo and endosperm.

It localises to the nucleus. In terms of biological role, probable transcription factor involved in the development of gametophytes and seeds. This chain is MADS-box transcription factor PHERES 2 (PHE2), found in Arabidopsis thaliana (Mouse-ear cress).